A 40-amino-acid polypeptide reads, in one-letter code: uncharacterized protein (40 aa).

This is an uncharacterized protein from Myxococcus xanthus (strain DK1622).